We begin with the raw amino-acid sequence, 152 residues long: MVILEQTHLVKNKAVDNKKSMKYSIFQQALTIAVILLISKIIESFMPIPMPASVIGLVLLFIALCTGIVKLGQVETVGTALTNNIGFLFVPAGISVINSLPILKQSPILIILLIIISTLLLLICTGFSSQLLVTKSLFPSKEKNEETSHIGG.

Transmembrane regions (helical) follow at residues 23 to 43, 45 to 65, 77 to 97, and 108 to 128; these read YSIF…KIIE, FMPI…IALC, VGTA…ISVI, and ILII…TGFS.

This sequence belongs to the CidA/LrgA family. LrgA subfamily.

It is found in the cell membrane. In terms of biological role, inhibits the expression or activity of extracellular murein hydrolases by interacting, possibly with LrgB, with the holin-like proteins CidA and/or CidB. The LrgAB and CidAB proteins may affect the proton motive force of the membrane. May be involved in programmed cell death (PCD), possibly triggering PCD in response to antibiotics and environmental stresses. This chain is Antiholin-like protein LrgA, found in Staphylococcus epidermidis (strain ATCC 12228 / FDA PCI 1200).